The primary structure comprises 132 residues: Fluoride-specific ion channel FluC (132 aa).

The next 4 helical transmembrane spans lie at 6–26 (VLQL…RFIV), 41–61 (GTLV…ILMI), 73–93 (FLIV…FETY), and 104–124 (AMLN…LGIW). Residues G80 and T83 each contribute to the Na(+) site.

It belongs to the fluoride channel Fluc/FEX (TC 1.A.43) family.

Its subcellular location is the cell inner membrane. The enzyme catalyses fluoride(in) = fluoride(out). Na(+) is not transported, but it plays an essential structural role and its presence is essential for fluoride channel function. Functionally, fluoride-specific ion channel. Important for reducing fluoride concentration in the cell, thus reducing its toxicity. This is Fluoride-specific ion channel FluC from Hydrogenovibrio crunogenus (strain DSM 25203 / XCL-2) (Thiomicrospira crunogena).